Here is a 369-residue protein sequence, read N- to C-terminus: S-adenosylmethionine decarboxylase proenzyme 2 (369 aa).

Catalysis depends on residues E9 and E12. The active-site Schiff-base intermediate with substrate; via pyruvic acid is the S69. S69 carries the post-translational modification Pyruvic acid (Ser); by autocatalysis. The active-site Proton donor; for catalytic activity is the C83. Residues S236 and H249 each act as proton acceptor; for processing activity in the active site.

It belongs to the eukaryotic AdoMetDC family. Pyruvate serves as cofactor. Post-translationally, is synthesized initially as an inactive proenzyme. Formation of the active enzyme involves a self-maturation process in which the active site pyruvoyl group is generated from an internal serine residue via an autocatalytic post-translational modification. Two non-identical subunits are generated from the proenzyme in this reaction, and the pyruvate is formed at the N-terminus of the alpha chain, which is derived from the carboxyl end of the proenzyme. The post-translation cleavage follows an unusual pathway, termed non-hydrolytic serinolysis, in which the side chain hydroxyl group of the serine supplies its oxygen atom to form the C-terminus of the beta chain, while the remainder of the serine residue undergoes an oxidative deamination to produce ammonia and the pyruvoyl group blocking the N-terminus of the alpha chain.

It carries out the reaction S-adenosyl-L-methionine + H(+) = S-adenosyl 3-(methylsulfanyl)propylamine + CO2. It functions in the pathway amine and polyamine biosynthesis; S-adenosylmethioninamine biosynthesis; S-adenosylmethioninamine from S-adenosyl-L-methionine: step 1/1. The polypeptide is S-adenosylmethionine decarboxylase proenzyme 2 (SAMDC2) (Brassica juncea (Indian mustard)).